Here is a 102-residue protein sequence, read N- to C-terminus: Large ribosomal subunit protein uL24 (102 aa).

This sequence belongs to the universal ribosomal protein uL24 family. As to quaternary structure, part of the 50S ribosomal subunit.

Its function is as follows. One of two assembly initiator proteins, it binds directly to the 5'-end of the 23S rRNA, where it nucleates assembly of the 50S subunit. Functionally, one of the proteins that surrounds the polypeptide exit tunnel on the outside of the subunit. This Limosilactobacillus fermentum (strain NBRC 3956 / LMG 18251) (Lactobacillus fermentum) protein is Large ribosomal subunit protein uL24.